The following is a 298-amino-acid chain: Bifunctional protein FolD (298 aa).

NADP(+) is bound by residues 165–167, S190, and I231; that span reads GRS.

The protein belongs to the tetrahydrofolate dehydrogenase/cyclohydrolase family. Homodimer.

The catalysed reaction is (6R)-5,10-methylene-5,6,7,8-tetrahydrofolate + NADP(+) = (6R)-5,10-methenyltetrahydrofolate + NADPH. It catalyses the reaction (6R)-5,10-methenyltetrahydrofolate + H2O = (6R)-10-formyltetrahydrofolate + H(+). The protein operates within one-carbon metabolism; tetrahydrofolate interconversion. Catalyzes the oxidation of 5,10-methylenetetrahydrofolate to 5,10-methenyltetrahydrofolate and then the hydrolysis of 5,10-methenyltetrahydrofolate to 10-formyltetrahydrofolate. In Prochlorococcus marinus subsp. pastoris (strain CCMP1986 / NIES-2087 / MED4), this protein is Bifunctional protein FolD.